Here is a 437-residue protein sequence, read N- to C-terminus: ATP-dependent RNA helicase RhlB (437 aa).

The Q motif signature appears at 9–37 (KKFADFPLHKEVQQALNEVGFEFCTPIQA). A Helicase ATP-binding domain is found at 40–219 (LPILLAKKDI…YDHMNEPEKV (180 aa)). 53 to 60 (AQTGTGKT) is a binding site for ATP. Residues 165 to 168 (DEAD) carry the DEAD box motif. In terms of domain architecture, Helicase C-terminal spans 243-390 (KMPLLLSLLE…VTSYDSEALL (148 aa)). A disordered region spans residues 394–437 (PAPKRIHRKPSSHSRNSRDRSGSRPQGGHRGNAPRRHDKTRRHS). The span at 425–437 (NAPRRHDKTRRHS) shows a compositional bias: basic residues.

Belongs to the DEAD box helicase family. RhlB subfamily. As to quaternary structure, component of the RNA degradosome, which is a multiprotein complex involved in RNA processing and mRNA degradation.

The protein localises to the cytoplasm. It carries out the reaction ATP + H2O = ADP + phosphate + H(+). Its function is as follows. DEAD-box RNA helicase involved in RNA degradation. Has RNA-dependent ATPase activity and unwinds double-stranded RNA. This is ATP-dependent RNA helicase RhlB from Shewanella piezotolerans (strain WP3 / JCM 13877).